Consider the following 385-residue polypeptide: Hemagglutinin-esterase (385 aa).

The signal sequence occupies residues 1–11 (MLIIFLFFNFC). Positions 1–121 (MLIIFLFFNF…SNDVWIFNKV (121 aa)) are esterase domain 1. Over 12–361 (YGFNEPLNVV…LNCFYDPLPI (350 aa)) the chain is Virion surface. The active-site Nucleophile is Ser34. The cysteines at positions 38 and 59 are disulfide-linked. N-linked (GlcNAc...) asparagine; by host glycans are attached at residues Asn83, Asn110, Asn145, Asn171, Asn196, and Asn251. Cys107 and Cys155 are joined by a disulfide. The tract at residues 122–239 (RFYRALYSNM…GSYKIFSTGF (118 aa)) is receptor binding. 2 disulfides stabilise this stretch: Cys183–Cys249 and Cys191–Cys222. The segment at 240 to 352 (VLSIPTKALC…NCPTSAYIKL (113 aa)) is esterase domain 2. Residues Cys280 and Cys285 are joined by a disulfide bond. Asn289 is a glycosylation site (N-linked (GlcNAc...) asparagine; by host). Residues Asp299 and His302 each act as charge relay system in the active site. A disulfide bond links Cys320 and Cys344. Asn331 carries N-linked (GlcNAc...) asparagine; by host glycosylation. The chain crosses the membrane as a helical span at residues 362-382 (ILQGILLFLALLFIVFLLFLV). Residues 383–385 (YHG) are Intravirion-facing.

The protein belongs to the influenza type C/coronaviruses hemagglutinin-esterase family. In terms of assembly, homodimer; disulfide-linked. Forms a complex with the M protein in the pre-Golgi. Associates then with S-M complex to form a ternary complex S-M-HE. Post-translationally, N-glycosylated in the host RER.

Its subcellular location is the virion membrane. It is found in the host cell membrane. It catalyses the reaction N-acetyl-9-O-acetylneuraminate + H2O = N-acetylneuraminate + acetate + H(+). It carries out the reaction N-acetyl-4-O-acetylneuraminate + H2O = N-acetylneuraminate + acetate + H(+). Functionally, structural protein that makes short spikes at the surface of the virus. Contains receptor binding and receptor-destroying activities. Mediates de-O-acetylation of N-acetyl-4-O-acetylneuraminic acid, which is probably the receptor determinant recognized by the virus on the surface of erythrocytes and susceptible cells. This receptor-destroying activity is important for virus release as it probably helps preventing self-aggregation and ensures the efficient spread of the progeny virus from cell to cell. May serve as a secondary viral attachment protein for initiating infection, the spike protein being the major one. May become a target for both the humoral and the cellular branches of the immune system. This Human coronavirus HKU1 (isolate N2) (HCoV-HKU1) protein is Hemagglutinin-esterase.